We begin with the raw amino-acid sequence, 950 residues long: Oxysterol-binding protein-related protein 1 (950 aa).

Residues methionine 1–arginine 237 are interaction with RAB7A. ANK repeat units lie at residues leucine 47–methionine 76, methionine 80–valine 109, and leucine 175–leucine 204. Residues leucine 235–alanine 334 enclose the PH domain. Residues asparagine 430 to glutamate 463 are a coiled coil. Residues serine 469–serine 483 carry the FFAT motif. Disordered stretches follow at residues lysine 795–serine 821 and methionine 881–aspartate 913. Residues aspartate 877–aspartate 913 adopt a coiled-coil conformation. A compositionally biased stretch (basic and acidic residues) spans serine 890–arginine 901.

Belongs to the OSBP family. As to quaternary structure, interacts (via FFAT motif) with VAPA. Interacts (via FFAT motif) with VAPB. Interacts with the GTP-bound form of RAB7A. Interacts with OAS1B. Interacts (via FFAT motif) with MOSPD2 (via MSP domain). Detected in prostate and liver.

Its subcellular location is the late endosome. Its function is as follows. Binds phospholipids; exhibits strong binding to phosphatidic acid and weak binding to phosphatidylinositol 3-phosphate. Stabilizes GTP-bound RAB7A on late endosomes/lysosomes and alters functional properties of late endocytic compartments via its interaction with RAB7A. Binds 25-hydroxycholesterol and cholesterol. In Rattus norvegicus (Rat), this protein is Oxysterol-binding protein-related protein 1.